The sequence spans 156 residues: Small ribosomal subunit protein uS7 (156 aa).

It belongs to the universal ribosomal protein uS7 family. Part of the 30S ribosomal subunit. Contacts proteins S9 and S11.

Functionally, one of the primary rRNA binding proteins, it binds directly to 16S rRNA where it nucleates assembly of the head domain of the 30S subunit. Is located at the subunit interface close to the decoding center, probably blocks exit of the E-site tRNA. The chain is Small ribosomal subunit protein uS7 from Desulfitobacterium hafniense (strain Y51).